Here is a 228-residue protein sequence, read N- to C-terminus: ATP phosphoribosyltransferase (228 aa).

Belongs to the ATP phosphoribosyltransferase family. Short subfamily. As to quaternary structure, heteromultimer composed of HisG and HisZ subunits.

Its subcellular location is the cytoplasm. The catalysed reaction is 1-(5-phospho-beta-D-ribosyl)-ATP + diphosphate = 5-phospho-alpha-D-ribose 1-diphosphate + ATP. Its pathway is amino-acid biosynthesis; L-histidine biosynthesis; L-histidine from 5-phospho-alpha-D-ribose 1-diphosphate: step 1/9. Its function is as follows. Catalyzes the condensation of ATP and 5-phosphoribose 1-diphosphate to form N'-(5'-phosphoribosyl)-ATP (PR-ATP). Has a crucial role in the pathway because the rate of histidine biosynthesis seems to be controlled primarily by regulation of HisG enzymatic activity. The protein is ATP phosphoribosyltransferase of Moorella thermoacetica (strain ATCC 39073 / JCM 9320).